A 340-amino-acid polypeptide reads, in one-letter code: Probable tRNA pseudouridine synthase B (340 aa).

D82 acts as the Nucleophile in catalysis. One can recognise a PUA domain in the interval L250–M325.

This sequence belongs to the pseudouridine synthase TruB family. Type 2 subfamily.

The enzyme catalyses uridine(55) in tRNA = pseudouridine(55) in tRNA. Functionally, could be responsible for synthesis of pseudouridine from uracil-55 in the psi GC loop of transfer RNAs. The chain is Probable tRNA pseudouridine synthase B from Pyrococcus furiosus (strain ATCC 43587 / DSM 3638 / JCM 8422 / Vc1).